We begin with the raw amino-acid sequence, 172 residues long: Adenylate kinase isoenzyme 6 (172 aa).

5 residues coordinate ATP: Gly-13, Gly-15, Lys-16, Thr-17, and Thr-18. The tract at residues 33–56 is NMPbind; the sequence is NVGDLAREGHLYDGYDEEYGCPIL. The interval 108–118 is LID; that stretch reads TRGYHEKKLQD. Arg-109 contacts ATP.

The protein belongs to the adenylate kinase family. AK6 subfamily. As to quaternary structure, monomer and homodimer. Interacts with small ribosomal subunit protein uS11. Not a structural component of 43S pre-ribosomes, but transiently interacts with them by binding to uS11. Interacts with COIL (via C-terminus).

The protein localises to the cytoplasm. It is found in the nucleus. Its subcellular location is the nucleoplasm. It localises to the cajal body. The catalysed reaction is AMP + ATP = 2 ADP. It catalyses the reaction ATP + H2O = ADP + phosphate + H(+). Its function is as follows. Broad-specificity nucleoside monophosphate (NMP) kinase that catalyzes the reversible transfer of the terminal phosphate group between nucleoside triphosphates and monophosphates. Also has ATPase activity. Involved in the late cytoplasmic maturation steps of the 40S ribosomal particles, specifically 18S rRNA maturation. While NMP activity is not required for ribosome maturation, ATPase activity is. Associates transiently with small ribosomal subunit protein uS11. ATP hydrolysis breaks the interaction with uS11. May temporarily remove uS11 from the ribosome to enable a conformational change of the ribosomal RNA that is needed for the final maturation step of the small ribosomal subunit. Its NMP activity may have a role in nuclear energy homeostasis. May be involved in regulation of Cajal body (CB) formation. The polypeptide is Adenylate kinase isoenzyme 6 (Rattus norvegicus (Rat)).